The sequence spans 847 residues: Beta-hexosaminidase (847 aa).

Intrachain disulfides connect Cys31–Cys40, Cys377–Cys385, and Cys484–Cys530. Glu519 acts as the Proton donor in catalysis.

This sequence belongs to the glycosyl hydrolase 20 family.

The enzyme catalyses Hydrolysis of terminal non-reducing N-acetyl-D-hexosamine residues in N-acetyl-beta-D-hexosaminides.. The protein operates within glycan degradation; chitin degradation. Functionally, hydrolysis of terminal, non-reducing N-acetyl-beta-D-glucosamine residues in chitobiose and higher analogs, and in glycoproteins. This Vibrio vulnificus protein is Beta-hexosaminidase (hex).